Here is a 134-residue protein sequence, read N- to C-terminus: Ethylmalonyl-CoA/methylmalonyl-CoA epimerase (134 aa).

The VOC domain occupies 4–134 (RLNHVAIAVP…NGCLVELEQV (131 aa)). Residues His-7, His-79, and Glu-130 each coordinate Co(2+). Glu-130 functions as the Proton donor/acceptor in the catalytic mechanism.

The protein belongs to the methylmalonyl-CoA epimerase family. The cofactor is Co(2+). Requires Mn(2+) as cofactor.

The catalysed reaction is (2R)-ethylmalonyl-CoA = (2S)-ethylmalonyl-CoA. It catalyses the reaction (R)-methylmalonyl-CoA = (S)-methylmalonyl-CoA. Functionally, promiscuous isomerase that catalyzes epimerization of both ethylmalonyl-CoA and methylmalonyl-CoA. Has thus a dual role in the ethylmalonyl-CoA pathway for acetyl-CoA assimilation required for R.sphaeroides growth on acetate as sole carbon source. This Cereibacter sphaeroides (strain ATCC 17023 / DSM 158 / JCM 6121 / CCUG 31486 / LMG 2827 / NBRC 12203 / NCIMB 8253 / ATH 2.4.1.) (Rhodobacter sphaeroides) protein is Ethylmalonyl-CoA/methylmalonyl-CoA epimerase.